Here is a 485-residue protein sequence, read N- to C-terminus: Glutamyl-tRNA(Gln) amidotransferase subunit A (485 aa).

Catalysis depends on charge relay system residues Lys-79 and Ser-154. The active-site Acyl-ester intermediate is Ser-178.

This sequence belongs to the amidase family. GatA subfamily. As to quaternary structure, heterotrimer of A, B and C subunits.

It carries out the reaction L-glutamyl-tRNA(Gln) + L-glutamine + ATP + H2O = L-glutaminyl-tRNA(Gln) + L-glutamate + ADP + phosphate + H(+). Its function is as follows. Allows the formation of correctly charged Gln-tRNA(Gln) through the transamidation of misacylated Glu-tRNA(Gln) in organisms which lack glutaminyl-tRNA synthetase. The reaction takes place in the presence of glutamine and ATP through an activated gamma-phospho-Glu-tRNA(Gln). The protein is Glutamyl-tRNA(Gln) amidotransferase subunit A of Desulforamulus reducens (strain ATCC BAA-1160 / DSM 100696 / MI-1) (Desulfotomaculum reducens).